Here is an 81-residue protein sequence, read N- to C-terminus: CLAVATA3/ESR (CLE)-related protein 25 (81 aa).

Residues 1-30 (MGGNGIRALVGVIASLGLIVFLLVGILANS) form the signal peptide. The interval 57 to 81 (KRKVPNGPDPIHNRKAETSRRPPRV) is disordered. 2 positions are modified to hydroxyproline: Pro61 and Pro64. A glycan (O-linked (Ara...) hydroxyproline) is linked at Pro64. Positions 67–81 (IHNRKAETSRRPPRV) are enriched in basic and acidic residues.

Belongs to the CLV3/ESR signal peptide family. Post-translationally, the O-glycosylation (arabinosylation) of the hydroxyproline Pro-64 enhances binding affinity of the CLE25p peptide for its receptor. As to expression, mostly expressed in flowers and siliques, and, to a lower extent, in roots, stems, apex, seedlings, leaves and pollen.

The protein resides in the secreted. Its subcellular location is the extracellular space. In terms of biological role, extracellular signal peptide that regulates cell fate. Represses root apical meristem maintenance. Regulates the transition of protophloem cells from proliferation to differentiation, thus impinging on postembryonic growth capacity of the root meristem; this signaling pathway requires CRN and CLV2. This chain is CLAVATA3/ESR (CLE)-related protein 25, found in Arabidopsis thaliana (Mouse-ear cress).